The chain runs to 216 residues: HTH-type transcriptional regulator EthR (216 aa).

Residues 1–10 are compositionally biased toward polar residues; that stretch reads MTTSAASQAS. The interval 1–24 is disordered; the sequence is MTTSAASQASLPRGRRTARPSGDD. The 61-residue stretch at 23–83 folds into the HTH tetR-type domain; that stretch reads DDRELAILAT…TLLDRVVNQA (61 aa). The segment at residues 46–65 is a DNA-binding region (H-T-H motif); that stretch reads SVDDLAKGAGISRPTFYFYF.

In terms of assembly, homodimer.

Functionally, involved in the repression of the monooxygenase EthA which is responsible of the formation of the active metabolite of ethionamide (ETH). The polypeptide is HTH-type transcriptional regulator EthR (ethR) (Mycobacterium bovis (strain ATCC BAA-935 / AF2122/97)).